We begin with the raw amino-acid sequence, 307 residues long: UDP-3-O-acyl-N-acetylglucosamine deacetylase (307 aa).

Positions 78, 241, and 245 each coordinate Zn(2+). Histidine 268 functions as the Proton donor in the catalytic mechanism.

This sequence belongs to the LpxC family. The cofactor is Zn(2+).

The enzyme catalyses a UDP-3-O-[(3R)-3-hydroxyacyl]-N-acetyl-alpha-D-glucosamine + H2O = a UDP-3-O-[(3R)-3-hydroxyacyl]-alpha-D-glucosamine + acetate. Its pathway is glycolipid biosynthesis; lipid IV(A) biosynthesis; lipid IV(A) from (3R)-3-hydroxytetradecanoyl-[acyl-carrier-protein] and UDP-N-acetyl-alpha-D-glucosamine: step 2/6. Catalyzes the hydrolysis of UDP-3-O-myristoyl-N-acetylglucosamine to form UDP-3-O-myristoylglucosamine and acetate, the committed step in lipid A biosynthesis. The chain is UDP-3-O-acyl-N-acetylglucosamine deacetylase from Acidovorax ebreus (strain TPSY) (Diaphorobacter sp. (strain TPSY)).